Consider the following 377-residue polypeptide: DNA dC-&gt;dU-editing enzyme APOBEC-3G (377 aa).

The tract at residues methionine 1–proline 60 is essential for cytoplasmic localization. CMP/dCMP-type deaminase domains lie at glycine 29 to leucine 138 and glycine 214 to leucine 327. Phosphothreonine; by PKA is present on threonine 32. Histidine 65, cysteine 97, and cysteine 100 together coordinate Zn(2+). The necessary for homooligomerization stretch occupies residues lysine 209 to alanine 335. Positions serine 213–glutamine 215 are interaction with DNA. Threonine 218 is subject to Phosphothreonine; by PKA and CAMK2. Position 257 (histidine 257) interacts with Zn(2+). The Proton donor role is filled by glutamate 259. The Zn(2+) site is built by cysteine 287 and cysteine 290. Residues arginine 312–arginine 319 are interaction with DNA.

Belongs to the cytidine and deoxycytidylate deaminase family. As to quaternary structure, homodimer. Homooligomer. Can bind RNA to form ribonucleoprotein complexes of high-molecular-mass (HMM) or low-molecular-mass (LMM). HMM is inactive and heterogeneous in protein composition because of binding nonselectively to cellular RNAs, which in turn are associated with variety of cellular proteins. The LMM form which is enzymatically active has few or no RNAs associated. Its ability to form homooligomer is distinct from its ability to assemble into HMM. Interacts with APOBEC3B, APOBEC3F, MOV10, AGO2, EIF4E, EIF4ENIF1, DCP2 and DDX6 in an RNA-dependent manner. Interacts with AGO1, AGO3 and PKA/PRKACA. Zn(2+) serves as cofactor.

It localises to the cytoplasm. The protein resides in the nucleus. Its subcellular location is the P-body. The catalysed reaction is a 2'-deoxycytidine in single-stranded DNA + H2O + H(+) = a 2'-deoxyuridine in single-stranded DNA + NH4(+). Functionally, DNA deaminase (cytidine deaminase) which acts as an inhibitor of retrovirus replication and retrotransposon mobility via deaminase-dependent and -independent mechanisms. Exhibits antiviral activity against vif-deficient: HIV-1 and simian immunodeficiency viruses (SIVs) and also simian foamy virus (SFV). After the penetration of retroviral nucleocapsids into target cells of infection and the initiation of reverse transcription, it can induce the conversion of cytosine to uracil in the minus-sense single-strand viral DNA, leading to G-to-A hypermutations in the subsequent plus-strand viral DNA. The resultant detrimental levels of mutations in the proviral genome, along with a deamination-independent mechanism that works prior to the proviral integration, together exert efficient antiretroviral effects in infected target cells. Selectively targets single-stranded DNA and does not deaminate double-stranded DNA or single- or double-stranded RNA. May inhibit the mobility of LTR retrotransposons. The protein is DNA dC-&gt;dU-editing enzyme APOBEC-3G (APOBEC3G) of Chlorocebus aethiops (Green monkey).